The primary structure comprises 405 residues: Acetate kinase (405 aa).

Asn-7 contacts Mg(2+). Residue Lys-14 coordinates ATP. Substrate is bound at residue Arg-99. Asp-156 serves as the catalytic Proton donor/acceptor. Residue 215–219 coordinates ATP; sequence HLGNG. Glu-391 contacts Mg(2+).

Belongs to the acetokinase family. Homodimer. Requires Mg(2+) as cofactor. Mn(2+) serves as cofactor.

The protein resides in the cytoplasm. The enzyme catalyses acetate + ATP = acetyl phosphate + ADP. The protein operates within metabolic intermediate biosynthesis; acetyl-CoA biosynthesis; acetyl-CoA from acetate: step 1/2. Functionally, catalyzes the formation of acetyl phosphate from acetate and ATP. Can also catalyze the reverse reaction. This Nostoc sp. (strain PCC 7120 / SAG 25.82 / UTEX 2576) protein is Acetate kinase.